Reading from the N-terminus, the 919-residue chain is PAX3- and PAX7-binding protein 1 (919 aa).

Basic residues predominate over residues 1-11 (MFRKARRVNVR). Disordered regions lie at residues 1 to 120 (MFRK…ENEE), 151 to 206 (KTEL…GGAF), and 237 to 277 (AREL…RIVF). At Ser16 the chain carries Phosphoserine. A compositionally biased stretch (acidic residues) spans 16–28 (SEEEERERDEEQE). The span at 49-59 (RAPAGESLLGP) shows a compositional bias: low complexity. Residues 75-87 (AEAGGGISGGAEP) are compositionally biased toward gly residues. Lys151 participates in a covalent cross-link: Glycyl lysine isopeptide (Lys-Gly) (interchain with G-Cter in SUMO1); alternate. Lys151 is covalently cross-linked (Glycyl lysine isopeptide (Lys-Gly) (interchain with G-Cter in SUMO2); alternate). Ser160 carries the post-translational modification Phosphoserine. Residues 163-174 (PLDKTCHAKDTN) show a composition bias toward basic and acidic residues. Residues 185–195 (GEDEMDMESEK) show a composition bias toward acidic residues. Phosphoserine is present on Ser193. Positions 237-258 (ARELGDFTPHDSEPGKGRLVRE) are enriched in basic and acidic residues. Over residues 259–270 (DENDASDDEDDD) the composition is skewed to acidic residues. Phosphoserine occurs at positions 264, 297, 559, and 560. The segment at 380–560 (TPSNEMAPVT…MADHLEGLSS (181 aa)) is necessary and sufficient for interaction with PAX7. A disordered region spans residues 533 to 566 (EREARRTRRRQAREQTGQMADHLEGLSSDDEETS). The residue at position 565 (Thr565) is a Phosphothreonine.

Belongs to the GCF family. Interacts with PAX3 and PAX7. Interacts with WDR5; associates with a histone methyltransferase (HMT) complex composed at least of RBBP5, ASH2L, SET1, SET2 and KMT2A/MLL1, KMT2D/MLL2, KMT2C/MLL3 and KMT2B/MLL4 through direct interaction with WDR5. As to expression, ubiquitously expressed in all tissues tested including skeletal muscle. Expressed in primary myoblasts.

The protein localises to the nucleus. Its function is as follows. Adapter protein linking the transcription factors PAX3 and PAX7 to the histone methylation machinery and involved in myogenesis. Associates with a histone methyltransferase complex that specifically mediates dimethylation and trimethylation of 'Lys-4' of histone H3. Mediates the recruitment of that complex to the transcription factors PAX3 and PAX7 on chromatin to regulate the expression of genes involved in muscle progenitor cells proliferation including ID3 and CDC20. This Mus musculus (Mouse) protein is PAX3- and PAX7-binding protein 1 (Paxbp1).